The primary structure comprises 125 residues: Oxytocin-neurophysin 1 (125 aa).

The N-terminal stretch at 1-19 is a signal peptide; it reads MAGPSLACCLLGLLALTSA. A disulfide bond links Cys-20 and Cys-25. Position 28 is a glycine amide (Gly-28). Cystine bridges form between Cys-41-Cys-85, Cys-44-Cys-58, Cys-52-Cys-75, Cys-59-Cys-65, Cys-92-Cys-104, Cys-98-Cys-116, and Cys-105-Cys-110.

It belongs to the vasopressin/oxytocin family. Interacts with oxytocin receptor (Ki=1.5 nM). Interacts with vasopressin V1aR/AVPR1A (Ki=37 nM), V1bR/AVPR1B (Ki=222 nM) and V2R/AVPR2 receptors (Ki=823 nM).

The protein localises to the secreted. In terms of biological role, neurophysin 1 specifically binds oxytocin. Its function is as follows. Oxytocin causes contraction of the smooth muscle of the uterus and of the mammary gland. Acts by binding to oxytocin receptor (OXTR). The sequence is that of Oxytocin-neurophysin 1 (OXT) from Homo sapiens (Human).